The sequence spans 282 residues: Probable endonuclease 4 (282 aa).

Residues H69, H109, E145, D179, H182, H216, D229, H231, and E261 each coordinate Zn(2+).

Belongs to the AP endonuclease 2 family. Zn(2+) is required as a cofactor.

It catalyses the reaction Endonucleolytic cleavage to 5'-phosphooligonucleotide end-products.. Functionally, endonuclease IV plays a role in DNA repair. It cleaves phosphodiester bonds at apurinic or apyrimidinic (AP) sites, generating a 3'-hydroxyl group and a 5'-terminal sugar phosphate. The chain is Probable endonuclease 4 from Chlorobium chlorochromatii (strain CaD3).